Consider the following 95-residue polypeptide: uncharacterized protein (95 aa).

Residues 12 to 32 form a helical membrane-spanning segment; sequence IASLVVSVVVLLIGLILWFFI.

It localises to the cell membrane. This is an uncharacterized protein from Escherichia coli O157:H7.